We begin with the raw amino-acid sequence, 83 residues long: Gas vesicle protein G1 (83 aa).

The protein belongs to the gas vesicle GvpG family. As to quaternary structure, gvpF to GvpM interact with each other in vitro, and may form multi-subunit complex(es). Might interact with GvpA1.

The protein resides in the gas vesicle. In terms of biological role, proteins GvpF to GvpM might be involved in nucleating gas vesicle formation. A minor component of the gas vesicle. Gas vesicles are hollow, gas filled proteinaceous nanostructures found in several microbial planktonic microorganisms. They allow positioning of halobacteria at the optimal depth for growth in the poorly aerated, shallow brine pools of their habitat. Its function is as follows. Expression of a 9.5 kb p-vac DNA fragment containing 2 divergently transcribed regions (gvpD-gvpE-gvpF-gvpG-gvpH-gvpI-gvpJ-gvpK-gvpL-gvpM and gvpA-gvpC-gvpN-gvpO) allows H.volcanii to produce gas vesicles. A minimal gas vesicle can be made in H.volcanii by gvpA1-gvpO1 plus gvpF1-gvpG1-gvpJ1-gvpK1-gvpL1-gvpM1; lack of enough GvpJ1 prevents formation. A similar region restores gas vesicle production in H.halobium without the p-vac locus, but it still has the c-vac locus. This chain is Gas vesicle protein G1 (gvpG11), found in Halobacterium salinarum (strain ATCC 700922 / JCM 11081 / NRC-1) (Halobacterium halobium).